A 970-amino-acid polypeptide reads, in one-letter code: MLGFLKRFFGSSQERILKKFQKLVDKVNIYDEMLTPLSDDELRNKTAELKQRYQNGESLDSMLPEAYGVVKNVCRRLAGTPVEVSGYHQRWDMVPYDVQILGAIAMHKGFITEMQTGEGKTLTAVMPLYLNALTGKPVHLVTVNDYLAQRDCEWVGSVLRWLGLTTGVLVSGTLLEKRKKIYQCDVVYGTASEFGFDYLRDNSIATRLEEQVGRGYYFAIIDEVDSILIDEARTPLIISGPGEKHNPVYFELKEKVASLVYLQKELCSRIALEARRGLDSFLDVDILPKDKKVLEGISEFCRSLWLVSKGMPLNRVLRRVREHPDLRAMIDKWDVYYHAEQNKEESLERLSELYIIVDEHNNDFELTDKGMQQWVEYAGGSTEEFVMMDMGHEYALIENDETLSPADKINKKIAISEEDTLRKARAHGLRQLLRAQLLMERDVDYIVRDDQIVIIDEHTGRPQPGRRFSEGLHQAIEAKEHVTIRKESQTLATVTLQNFFRLYEKLAGMTGTAITESREFKEIYNLYVLQVPTFKPCLRIDHNDEFYMTEREKYHAIVNEIATIHGKGNPILVGTESVEVSEKLSRILRQNRIEHTVLNAKNHAQEAEIIAGAGKLGAVTVATNMAGRGTDIKLDNEAVIVGGLHVIGTTRHQSRRIDRQLRGRCARLGDPGAAKFFLSFEDRLMRLFASPKLNTLIRHFRPPEGEAMSDPMFNRLIETAQKRVEGRNYTIRKHTLEYDDVMNKQRQAIYAFRHDVLHAESVFDLAKEILCHVSLMVASLVMSDRQFKGWTLPNLEEWITSSFPIALNIEELRQLKDTDSIAEKIAAELIQEFQVRFDHMVEGLSKAGGEELDASAICRDVVRSVMVMHIDEQWRIHLVDMDLLRSEVGLRTVGQKDPLLEFKHESFLLFESLIRDIRITIARHLFRLELTVEPNPRVNNVIPTVATSFHNNVNYGPLELTVVTDSEDQD.

ATP-binding positions include Gln-99, 117–121 (GEGKT), and Asp-631.

The protein belongs to the SecA family. Monomer and homodimer. Part of the essential Sec protein translocation apparatus which comprises SecA, SecYEG and auxiliary proteins SecDF. Other proteins may also be involved.

The protein resides in the cell inner membrane. It is found in the cytoplasm. It catalyses the reaction ATP + H2O + cellular proteinSide 1 = ADP + phosphate + cellular proteinSide 2.. Part of the Sec protein translocase complex. Interacts with the SecYEG preprotein conducting channel. Has a central role in coupling the hydrolysis of ATP to the transfer of proteins into and across the cell membrane, serving as an ATP-driven molecular motor driving the stepwise translocation of polypeptide chains across the membrane. The chain is Protein translocase subunit SecA from Chlamydia pneumoniae (Chlamydophila pneumoniae).